An 85-amino-acid chain; its full sequence is MRKHSDCMNFCAVDATKGICRLSKQMINLDDAACPEIKVMPKCKNCKNFVEANDEGIGKCVGLEKEDWVYSTLNAITCEGHVFNE.

[4Fe-4S] cluster contacts are provided by histidine 4, cysteine 7, cysteine 20, cysteine 34, cysteine 43, cysteine 46, cysteine 60, and cysteine 78.

Belongs to the HPA decarboxylase small subunit family. As to quaternary structure, heterooctamer consisting of 4 large (HpdB) subunits and 4 small (HpdC) subunits, arranged as a tetramer of heterodimers. It depends on [4Fe-4S] cluster as a cofactor.

It catalyses the reaction 4-hydroxyphenylacetate + H(+) = 4-methylphenol + CO2. The enzyme catalyses 3,4-dihydroxyphenylacetate + H(+) = 4-methylcatechol + CO2. In terms of biological role, component of the HPA decarboxylase that decarboxylates phenylacetates with a hydroxyl group in the p-position. Active toward 4-hydroxyphenylacetate and 3,4-dihydroxyphenylacetate, forming 4-methylphenol and 4-methylcatechol, respectively. Is likely involved in the catabolism of aromatic amino acids such as tyrosine fermentation. 4-methylphenol (p-cresol) formation provides metabolic toxicity, which allows an active suppression of other microbes and may provide growth advantages for the producers in highly competitive environments. The small subunit is essential for enzymatic activity of HPA decarboxylase, and also seems to be involved in the regulation of the enzyme oligomeric state and catalytic activity. This Clostridioides difficile (strain 630) (Peptoclostridium difficile) protein is 4-hydroxyphenylacetate decarboxylase small subunit.